Reading from the N-terminus, the 254-residue chain is Imidazole glycerol phosphate synthase subunit HisF (254 aa).

Active-site residues include Asp13 and Asp132.

Belongs to the HisA/HisF family. As to quaternary structure, heterodimer of HisH and HisF.

The protein localises to the cytoplasm. The catalysed reaction is 5-[(5-phospho-1-deoxy-D-ribulos-1-ylimino)methylamino]-1-(5-phospho-beta-D-ribosyl)imidazole-4-carboxamide + L-glutamine = D-erythro-1-(imidazol-4-yl)glycerol 3-phosphate + 5-amino-1-(5-phospho-beta-D-ribosyl)imidazole-4-carboxamide + L-glutamate + H(+). The protein operates within amino-acid biosynthesis; L-histidine biosynthesis; L-histidine from 5-phospho-alpha-D-ribose 1-diphosphate: step 5/9. Functionally, IGPS catalyzes the conversion of PRFAR and glutamine to IGP, AICAR and glutamate. The HisF subunit catalyzes the cyclization activity that produces IGP and AICAR from PRFAR using the ammonia provided by the HisH subunit. This Sulfurovum sp. (strain NBC37-1) protein is Imidazole glycerol phosphate synthase subunit HisF.